The chain runs to 447 residues: MDTAQILETIKMISEENLDIRTITMGISLLDCIDSDSDKACQKIYDKITTKAKDLVKVGNQIATEYGIPVINKRVSVTPISLIAAASKDKDYVKYAKALDKAAQTLGIDFIGGYSALVQKGYQNGDRTLIKSLPQALAETNLVCASVNVGSTRSGINMDAVKEMGQVVKSASELDFMTNAKMVIFCNAVEDNPFMAGGFHGVGEPDAVINVGVSGPGVVKSALEKVKGASMDVVAETIKQTAFKVTRMGQLVGSIAAEKLNVPFGIVDLSLAPTPAVGDSVAQILEEIGLEQVGTHGTTAALAMLNDAVKKGGIMACSHVGGLSGAFIPVSEDAGMIDAVNAGSLNIEKLEAMTVVCSVGLDMIAIPGDTPAETISAMIADEAAIGMINNKTTAVRVVPVPGKDVGETVEFGGLLGHAPIMAVNKVSSADMINRGGLIPAPVHSFKN.

The protein belongs to the UPF0210 family. As to quaternary structure, homodimer.

This chain is UPF0210 protein LSL_0162, found in Ligilactobacillus salivarius (strain UCC118) (Lactobacillus salivarius).